Reading from the N-terminus, the 322-residue chain is Putative DNA-directed RNA polymerase subunit alpha-like 2 (322 aa).

The segment at 1 to 232 is alpha N-terminal domain (alpha-NTD); it reads MSNPNNGAEW…GLLSLVFQAE (232 aa). The segment at 280-322 is alpha C-terminal domain (alpha-CTD); that stretch reads EGPVTDEEGDSIDPTFTPVQKWDITMNSYQYSGETFQGLLSRF.

Belongs to the RNA polymerase alpha chain family. As to quaternary structure, in plastids the minimal PEP RNA polymerase catalytic core is composed of four subunits: alpha, beta, beta', and beta''. When a (nuclear-encoded) sigma factor is associated with the core the holoenzyme is formed, which can initiate transcription.

It localises to the plastid. It is found in the chloroplast. It catalyses the reaction RNA(n) + a ribonucleoside 5'-triphosphate = RNA(n+1) + diphosphate. DNA-dependent RNA polymerase catalyzes the transcription of DNA into RNA using the four ribonucleoside triphosphates as substrates. The polypeptide is Putative DNA-directed RNA polymerase subunit alpha-like 2 (rpoAL2-A) (Pelargonium hortorum (Common geranium)).